The chain runs to 615 residues: 1-deoxy-D-xylulose-5-phosphate synthase (615 aa).

Residues His72 and 111–113 (GHS) contribute to the thiamine diphosphate site. Residue Asp142 coordinates Mg(2+). Thiamine diphosphate contacts are provided by residues 143 to 144 (GA), Asn171, Tyr278, and Glu360. Residue Asn171 coordinates Mg(2+).

This sequence belongs to the transketolase family. DXPS subfamily. As to quaternary structure, homodimer. The cofactor is Mg(2+). Requires thiamine diphosphate as cofactor.

The enzyme catalyses D-glyceraldehyde 3-phosphate + pyruvate + H(+) = 1-deoxy-D-xylulose 5-phosphate + CO2. It participates in metabolic intermediate biosynthesis; 1-deoxy-D-xylulose 5-phosphate biosynthesis; 1-deoxy-D-xylulose 5-phosphate from D-glyceraldehyde 3-phosphate and pyruvate: step 1/1. Functionally, catalyzes the acyloin condensation reaction between C atoms 2 and 3 of pyruvate and glyceraldehyde 3-phosphate to yield 1-deoxy-D-xylulose-5-phosphate (DXP). The polypeptide is 1-deoxy-D-xylulose-5-phosphate synthase (Campylobacter jejuni subsp. jejuni serotype O:23/36 (strain 81-176)).